The following is a 347-amino-acid chain: Phosphoribosylformylglycinamidine cyclo-ligase (347 aa).

The protein belongs to the AIR synthase family.

The protein localises to the cytoplasm. The catalysed reaction is 2-formamido-N(1)-(5-O-phospho-beta-D-ribosyl)acetamidine + ATP = 5-amino-1-(5-phospho-beta-D-ribosyl)imidazole + ADP + phosphate + H(+). It functions in the pathway purine metabolism; IMP biosynthesis via de novo pathway; 5-amino-1-(5-phospho-D-ribosyl)imidazole from N(2)-formyl-N(1)-(5-phospho-D-ribosyl)glycinamide: step 2/2. This Syntrophus aciditrophicus (strain SB) protein is Phosphoribosylformylglycinamidine cyclo-ligase.